The following is a 263-amino-acid chain: Flagellar brake protein YcgR (263 aa).

The tract at residues 1 to 21 is disordered; it reads MAELSTPSPASPAPLDGGRGD. The 118-residue stretch at 133-250 folds into the PilZ domain; the sequence is QRREFYRLQV…DTRIQRYIFK (118 aa).

Belongs to the YcgR family. In terms of assembly, monomer. Interacts with the flagellar basal bodies.

It is found in the bacterial flagellum basal body. In terms of biological role, acts as a flagellar brake, regulating swimming and swarming in a bis-(3'-5') cyclic diguanylic acid (c-di-GMP)-dependent manner. Binds 1 c-di-GMP dimer per subunit. Increasing levels of c-di-GMP lead to decreased motility. This is Flagellar brake protein YcgR from Thauera aminoaromatica.